Here is a 283-residue protein sequence, read N- to C-terminus: Bifunctional protein FolD (283 aa).

Residues 164–166 (GRS), Ser189, and Ile230 contribute to the NADP(+) site.

Belongs to the tetrahydrofolate dehydrogenase/cyclohydrolase family. As to quaternary structure, homodimer.

It catalyses the reaction (6R)-5,10-methylene-5,6,7,8-tetrahydrofolate + NADP(+) = (6R)-5,10-methenyltetrahydrofolate + NADPH. The catalysed reaction is (6R)-5,10-methenyltetrahydrofolate + H2O = (6R)-10-formyltetrahydrofolate + H(+). It participates in one-carbon metabolism; tetrahydrofolate interconversion. Functionally, catalyzes the oxidation of 5,10-methylenetetrahydrofolate to 5,10-methenyltetrahydrofolate and then the hydrolysis of 5,10-methenyltetrahydrofolate to 10-formyltetrahydrofolate. The polypeptide is Bifunctional protein FolD (Lacticaseibacillus casei (strain BL23) (Lactobacillus casei)).